The following is a 400-amino-acid chain: Cell division protein FtsZ 2 (400 aa).

A compositionally biased stretch (basic and acidic residues) spans 1 to 16 (MQDIVREAMERDEAER). The disordered stretch occupies residues 1–30 (MQDIVREAMERDEAERQTQSSLEDSDDQFG). Residues 41-45 (GAGNN), 128-130 (GTG), Glu159, Arg162, and Asp205 contribute to the GTP site. A disordered region spans residues 338 to 400 (VLGPSTQKQA…EKNNGLDVIR (63 aa)). Over residues 352–364 (QSIQSRESQQQHS) the composition is skewed to low complexity. Polar residues predominate over residues 365–382 (GSEFDSSERAQTAQSGTW). Basic and acidic residues predominate over residues 385–400 (GGRDEVEKNNGLDVIR).

It belongs to the FtsZ family. As to quaternary structure, homodimer. Polymerizes to form a dynamic ring structure in a strictly GTP-dependent manner. Interacts directly with several other division proteins. Interacts with SepF.

Its subcellular location is the cytoplasm. Essential cell division protein that forms a contractile ring structure (Z ring) at the future cell division site. The regulation of the ring assembly controls the timing and the location of cell division. One of the functions of the FtsZ ring is to recruit other cell division proteins to the septum to produce a new cell wall between the dividing cells. Binds GTP and shows GTPase activity. Required for division ring constriction. The protein is Cell division protein FtsZ 2 of Haloferax volcanii (strain ATCC 29605 / DSM 3757 / JCM 8879 / NBRC 14742 / NCIMB 2012 / VKM B-1768 / DS2) (Halobacterium volcanii).